Consider the following 1806-residue polypeptide: MAASEQFASWNPALRSEDHSIPTIENTLDQQPTSPAEQVESQAKTVTPPPQEDSPLQEVPEDVVDTVVPPVSGDTQPIANALDQDQTQPQPEETDRDIPPMIVDTPKDTQETQESVPRNATDEGNVFSLESNDSAFPTTQNAPDLSWAEDSQPQAVERHDDSVWTLHQQSKETPTSPNGDFGTTSHDLWGSPTSPGGEHDFFDQLKTQTKPIYVPPESESRYEEGVPLLDEGVSSPTEPTANQESRIDQIFDGDEDEEGAFFNEVQESASTDESRPYGHMTRKSTSQVLDSLDTSMKSPVSDASPTAREFDNILAAAASGNQVKKSTSEEDLAARWQAELSDEEPEPAPEDDLAARWQAELDDDDDMLLEDETSGELPNQEMHMNGIASQAAPPVLSSPFGTPESAARPKAQPTSYTPHQPSTSDLLQGIPAQGYAQGNTTTAPNYFAPQPPKPATSRAESFAERSKEGYKSPYDLPEDLARPRRAAATHRPVVVPGNNMAPGPPAASVPPPQRAPSMPTPPMATLPSTTTAPPAPPKNFYEELPPPPPKPQSRPSSSGRYTPGPASSHPVLPPPSNPYAAVPPPPTVDSSIPPHLHQPEKTDPYVNLLAPSAPSAPSAPSAASRYSPKPPSLQGGVKPPPSPRYSPAPPPSTAPVPPRNRYASQPSSGPGQTAVLPFQPRTSSPLAYHEKVSYQPQEGLRKPSFAEQESAAGPQNEIQEQPVGHHVGQSVPGGTVVDTQNTGAPMAPQQTSPPRNPYAPPAYVNDFSKRVAPMTSAPPPASAPPATETQFMPPRRSQTQSPSQQVLGPRLSVPAVDPLQRPASVHGSGSPTKSSSPYAPSAPAHNRVASQQLEFIPPTDGQELDPLERWRGAPIVKFGFGGAIVSCFPKHIPRYTAGQPAPKIMAAPGEARIHQLRDWVPIADSIVQHPGPLKNKSKKKDLLAWLSSKIAQFENEGISEAAQLHPESGMRHDEKILLWKIIRILVEHDGTLEGSEPIKKALRGVIFPHLAENPDSSESYGANVPSFGDIKPLDAPSKSDAMDPQAIGNLRNYLLLGDREKAVWSAVDNRLWGHAMVIASTMDKSVWKQVVQEFVRREVRSATGNTESLAALYEIFAGNVEESIDELVPPSARAGMQMISTVDGHGPAKNALDGLNSWRDTLGLVLNNRSPDDHQALLSLGRLLLSYGRVEAAHICFIFSRAAVFGGADDPQSCIVLLGADHQHLPSTILQDEDAFLLTEAYEYATTILAGAPMATLPHLLAFKLLHAWSLADRGRKAEAQQYCDAIAASLKSTTKPSGYHNQHLLFGVDELSARLRQTTNDGGSSWISKPSMEKVSGSMWAKFNSFVAGDDSDAASTGSGKAGEGDVGPFARFTGTPTLSLFLAADPPVTSQITNMPLMHLLNNLADGLRWTPSAHHPMDFPFPQRRGSQEPATPMENTFYQGGGPYGSPPAVGYQSTPPQTSYMPLAPVEEDSATQSYPAASAPPHEPAMNTSPYLPPGGPSSQPLNRGSMMDSQTGASSYMPAETSGSSYTPPTFNTGYEPPTIETTAAPDTQSTDEPADDVPLKKKKSFMDDDDDDDIAARAAALQKAEKERKDREAEENFRRIAEAEAKNAPQQKKSSWWPGWFGGGKKEENNNSGGPIRAKLGEENSFYYDKELKKWVNKKDPNSATVSRGTPPPPRGAAPPSRTASGSSAPPPAASPKPPGPDSRPTSSAGAPPPQTGSPAPSLLGAPPPFLNAVPRSVSTGAAAPPTRPGSSSGPPPRPATSLSTASSIDDLLGPPQARKGGTVKGKKKGRYVDVMAK.

Disordered regions lie at residues 1–202 (MAAS…HDFF), 263–305 (NEVQ…DASP), 318–846 (ASGN…PAHN), 1418–1647 (HPMD…IRAK), and 1663–1806 (WVNK…VMAK). Composition is skewed to polar residues over residues 23–45 (TIEN…QAKT), 73–91 (GDTQ…QPQP), 128–154 (SLES…SQPQ), 165–194 (TLHQ…SPTS), and 283–304 (KSTS…SDAS). Composition is skewed to acidic residues over residues 340-352 (LSDE…PEDD) and 360-374 (ELDD…DETS). Over residues 412–426 (QPTSYTPHQPSTSDL) the composition is skewed to polar residues. Residues 461–470 (SFAERSKEGY) show a composition bias toward basic and acidic residues. The segment covering 489 to 501 (THRPVVVPGNNMA) has biased composition (low complexity). Composition is skewed to pro residues over residues 502 to 524 (PGPP…PPMA) and 571 to 587 (VLPP…PPPT). The span at 610-627 (APSAPSAPSAPSAASRYS) shows a compositional bias: low complexity. Residues 638–658 (KPPPSPRYSPAPPPSTAPVPP) show a composition bias toward pro residues. Composition is skewed to polar residues over residues 662 to 671 (YASQPSSGPG) and 737 to 753 (VDTQ…QTSP). Low complexity-rich tracts occupy residues 793–805 (PPRR…PSQQ) and 830–844 (SPTK…SAPA). Composition is skewed to polar residues over residues 1456–1465 (YQSTPPQTSY), 1503–1521 (PSSQ…TGAS), 1528–1540 (TSGS…TFNT), and 1547–1559 (IETT…QSTD). Basic and acidic residues predominate over residues 1591–1613 (KAEKERKDREAEENFRRIAEAEA). The segment covering 1686–1696 (APPSRTASGSS) has biased composition (low complexity). Positions 1697 to 1710 (APPPAASPKPPGPD) are enriched in pro residues. Residues 1747 to 1761 (STGAAAPPTRPGSSS) are compositionally biased toward low complexity.

Belongs to the SEC16 family.

Its subcellular location is the endoplasmic reticulum membrane. In terms of biological role, involved in the initiation of assembly of the COPII coat required for the formation of transport vesicles from the endoplasmic reticulum (ER) and the selection of cargo molecules. Also involved in autophagy. This is COPII coat assembly protein sec16 (sec16) from Aspergillus terreus (strain NIH 2624 / FGSC A1156).